A 442-amino-acid chain; its full sequence is Armadillo-like helical domain containing protein 1 (442 aa).

The chain is Armadillo-like helical domain containing protein 1 from Bos taurus (Bovine).